A 284-amino-acid polypeptide reads, in one-letter code: Cell division protein DivIB (284 aa).

The tract at residues M1–P21 is disordered. The Cytoplasmic portion of the chain corresponds to M1–R63. A helical membrane pass occupies residues V64 to P84. The Extracellular segment spans residues V85–K284. Positions S86–Y156 constitute a POTRA domain.

This sequence belongs to the FtsQ/DivIB family. DivIB subfamily.

The protein localises to the cell membrane. Its function is as follows. Cell division protein that may be involved in stabilizing or promoting the assembly of the division complex. The polypeptide is Cell division protein DivIB (Ligilactobacillus salivarius (strain CECT 5713) (Lactobacillus salivarius)).